Here is a 282-residue protein sequence, read N- to C-terminus: Undecaprenyl-diphosphatase (282 aa).

6 helical membrane-spanning segments follow: residues 90-110 (YRLGWYVIIGTIPICVMGLLF), 121-141 (LWVVATALVVFSGVIALAEYL), 165-185 (LALVPGVSRSGSTISAGLFLG), 194-214 (FGFLLAIPAVFASGLFSLPDA), 228-248 (QLLVATLIAFVVGLAAVSWFL), and 256-276 (MYWFVGYRVVVGVVVLILLAT).

Belongs to the UppP family.

The protein resides in the cell membrane. The catalysed reaction is di-trans,octa-cis-undecaprenyl diphosphate + H2O = di-trans,octa-cis-undecaprenyl phosphate + phosphate + H(+). Its function is as follows. Catalyzes the dephosphorylation of undecaprenyl diphosphate (UPP). Confers resistance to bacitracin. The sequence is that of Undecaprenyl-diphosphatase from Mycobacterium marinum (strain ATCC BAA-535 / M).